The following is a 451-amino-acid chain: MLSKTHIMFIPFPAQGHMSPMMQFAKRLAWKGVRITIVLPAQIRDSMQITNSLINTECISFDFDKDDGMPYSMQAYMGVVKLKVTNKLSDLLEKQKTNGYPVNLLVVDSLYPSRVEMCHQLGVKGAPFFTHSCAVGAIYYNAHLGKLKIPPEEGLTSVSLPSIPLLGRDDLPIIRTGTFPDLFEHLGNQFSDLDKADWIFFNTFDKLENEEAKWLSSQWPITSIGPLIPSMYLDKQLPNDKGNGINLYKADVGSCIKWLDAKDPGSVVYASFGSVKHNFGDDYMDEVAWGLLHSKYNFIWVVIEPERTKLSSDFLAEAEEKGLIVSWCPQLEVLSHKSIGSFMTHCGWNSTVEALSLGVPMVAVPQQFDQPVNAKYIVDVWQIGVRVPIGEDGVVLRGEVANCIKDVMEGEIGDELRGNALKWKGLAVEAMEKGGSSDKNIDEFISKLVSS.

H17 acts as the Proton acceptor in catalysis. H17 contributes to the an anthocyanidin binding site. Residue D108 is the Charge relay of the active site. 9 residues coordinate UDP-alpha-D-glucose: T130, Q330, H345, W348, N349, S350, E353, D369, and Q370.

The protein belongs to the UDP-glycosyltransferase family. Expressed at higher levels in roots than in leaves.

It carries out the reaction (20S)-ginsenoside C-K + UDP-alpha-D-glucose = (20S)-ginsenoside F2 + UDP + H(+). The catalysed reaction is (20S)-protopanaxadiol + UDP-alpha-D-glucose = (20S)-ginsenoside Rh2 + UDP + H(+). It participates in secondary metabolite biosynthesis; terpenoid biosynthesis. In terms of biological role, component of the dammarane-type triterpene saponins (e.g. PPD-type ginsenosides or panaxosides) biosynthetic pathway. Glycosyltransferase that catalyzes the biosynthesis of ginsenoside Rh2 from protopanaxadiol (PPD) and the conversion of compound K to ginsenoside F2. The sequence is that of UDP-glucosyltransferase 74AE2 from Panax ginseng (Korean ginseng).